The following is a 267-amino-acid chain: Octanoyltransferase (267 aa).

Positions 77 to 265 (GTASELVWLV…AFESVFGPRQ (189 aa)) constitute a BPL/LPL catalytic domain. Substrate is bound by residues 116 to 123 (RGGEYTYH), 196 to 198 (AIG), and 209 to 211 (GIA). Catalysis depends on Cys227, which acts as the Acyl-thioester intermediate.

It belongs to the LipB family.

The protein resides in the cytoplasm. The catalysed reaction is octanoyl-[ACP] + L-lysyl-[protein] = N(6)-octanoyl-L-lysyl-[protein] + holo-[ACP] + H(+). The protein operates within protein modification; protein lipoylation via endogenous pathway; protein N(6)-(lipoyl)lysine from octanoyl-[acyl-carrier-protein]: step 1/2. Functionally, catalyzes the transfer of endogenously produced octanoic acid from octanoyl-acyl-carrier-protein onto the lipoyl domains of lipoate-dependent enzymes. Lipoyl-ACP can also act as a substrate although octanoyl-ACP is likely to be the physiological substrate. This is Octanoyltransferase from Brucella suis biovar 1 (strain 1330).